The primary structure comprises 373 residues: Carnosine N-methyltransferase (373 aa).

Residues Gln-110, Arg-113, Gly-154, Glu-175, Asp-242, Phe-243, and Cys-262 each coordinate S-adenosyl-L-methionine. Asp-266 contacts carnosine. Tyr-274 serves as a coordination point for S-adenosyl-L-methionine. 2 residues coordinate carnosine: His-297 and Tyr-356.

The protein belongs to the carnosine N-methyltransferase family.

It is found in the cytoplasm. It localises to the nucleus. It catalyses the reaction carnosine + S-adenosyl-L-methionine = anserine + S-adenosyl-L-homocysteine + H(+). Functionally, N-methyltransferase that mediates the formation of anserine (beta-alanyl-N(Pi)-methyl-L-histidine) from carnosine. Also methylates other L-histidine-containing di- and tripeptides such as Gly-Gly-His, Gly-His and homocarnosine (GABA-His). The protein is Carnosine N-methyltransferase of Schizosaccharomyces pombe (strain 972 / ATCC 24843) (Fission yeast).